A 161-amino-acid chain; its full sequence is Large ribosomal subunit protein uL15 (161 aa).

The interval 1-43 is disordered; that stretch reads MKLSEISDNPGARKKRMRIGRGIGSGKGKTGGRGGKGQTARSG. Residues 21–37 are compositionally biased toward gly residues; that stretch reads RGIGSGKGKTGGRGGKG.

It belongs to the universal ribosomal protein uL15 family. As to quaternary structure, part of the 50S ribosomal subunit.

Functionally, binds to the 23S rRNA. The chain is Large ribosomal subunit protein uL15 from Rhodopseudomonas palustris (strain BisB5).